A 373-amino-acid chain; its full sequence is MILQELQLSHYRNYEELAVTFAPGINVLIGENAQGKTNLLEAIYLLAFTKSHRTAKDRELIGWHQKLARVSGVVERASGRLPLEVQISTSGKRVKVNHLFQKRLSTYVGNLNVVLFAPEDLALVKGAPVNRRQFMDMEFGQMSSKYLYNVSRFNQQLAQRNAYLRQFKYGQQSDRILLGVITDQLASVGGEVVVARQQLVKRLGKWAAELHHHISKQKEELSLQYVSQVEVDDQTTEEEAVAQLRRLYSENEEREIEHGTSLIGPQRDDIHFIVNGQNVQRFGSQGQQRTTALAVKLAEIDLMKEQTGEYPLLLLDDVLSELDDDRQTHLLTAIQDKVQTFITTTSLSGVARQLIHHPTIFTIQSGTLTKEEN.

30–37 (GENAQGKT) lines the ATP pocket.

It belongs to the RecF family.

Its subcellular location is the cytoplasm. The RecF protein is involved in DNA metabolism; it is required for DNA replication and normal SOS inducibility. RecF binds preferentially to single-stranded, linear DNA. It also seems to bind ATP. The chain is DNA replication and repair protein RecF from Limosilactobacillus fermentum (strain NBRC 3956 / LMG 18251) (Lactobacillus fermentum).